We begin with the raw amino-acid sequence, 1035 residues long: Retinoblastoma-related protein (1035 aa).

The interval 403-426 (ITSPLSPHRSPASHANGIPGSANS) is disordered. Residues 431-632 (TPVSTAMTTA…EKGSSLYNSL (202 aa)) are domain A. Residues 431–885 (TPVSTAMTTA…NEIFIPAAKP (455 aa)) are pocket. The spacer stretch occupies residues 633 to 753 (TVARPALSAE…PGGGGETCAE (121 aa)). 2 disordered regions span residues 674–697 (PSLQKHETSPGSGQNGDLRSPKRP) and 721–748 (GNLKSKLPPPPLQSAFASPTRPNPGGGG). The interval 754–885 (TGINVFFTKI…NEIFIPAAKP (132 aa)) is domain B.

It belongs to the retinoblastoma protein (RB) family.

The protein localises to the nucleus. Its function is as follows. Regulator of biological processes that recruits a histone deacetylase to control gene transcription. May play a role in the entry into mitosis, negatively regulating the cell proliferation. Formation of stable complexes with geminiviridae replication-associated proteins may create a cellular environment which favors viral DNA replication. The protein is Retinoblastoma-related protein (RBL901) of Populus trichocarpa (Western balsam poplar).